The following is a 61-amino-acid chain: Small ribosomal subunit protein bS21 (61 aa).

The segment at 36–61 is disordered; the sequence is EHYESPSVKRKKKAEAARKRKYKYGR. Residues 43–61 are compositionally biased toward basic residues; that stretch reads VKRKKKAEAARKRKYKYGR.

The protein belongs to the bacterial ribosomal protein bS21 family.

This is Small ribosomal subunit protein bS21 (rpsU) from Caldanaerobacter subterraneus subsp. tengcongensis (strain DSM 15242 / JCM 11007 / NBRC 100824 / MB4) (Thermoanaerobacter tengcongensis).